The following is a 136-amino-acid chain: Large ribosomal subunit protein uL16 (136 aa).

The protein belongs to the universal ribosomal protein uL16 family. In terms of assembly, part of the 50S ribosomal subunit.

Binds 23S rRNA and is also seen to make contacts with the A and possibly P site tRNAs. The chain is Large ribosomal subunit protein uL16 from Shewanella sediminis (strain HAW-EB3).